Here is a 108-residue protein sequence, read N- to C-terminus: Pyrimidine/purine nucleoside phosphorylase (108 aa).

It belongs to the nucleoside phosphorylase PpnP family.

It catalyses the reaction a purine D-ribonucleoside + phosphate = a purine nucleobase + alpha-D-ribose 1-phosphate. The enzyme catalyses adenosine + phosphate = alpha-D-ribose 1-phosphate + adenine. The catalysed reaction is cytidine + phosphate = cytosine + alpha-D-ribose 1-phosphate. It carries out the reaction guanosine + phosphate = alpha-D-ribose 1-phosphate + guanine. It catalyses the reaction inosine + phosphate = alpha-D-ribose 1-phosphate + hypoxanthine. The enzyme catalyses thymidine + phosphate = 2-deoxy-alpha-D-ribose 1-phosphate + thymine. The catalysed reaction is uridine + phosphate = alpha-D-ribose 1-phosphate + uracil. It carries out the reaction xanthosine + phosphate = alpha-D-ribose 1-phosphate + xanthine. Functionally, catalyzes the phosphorolysis of diverse nucleosides, yielding D-ribose 1-phosphate and the respective free bases. Can use uridine, adenosine, guanosine, cytidine, thymidine, inosine and xanthosine as substrates. Also catalyzes the reverse reactions. In Polaromonas sp. (strain JS666 / ATCC BAA-500), this protein is Pyrimidine/purine nucleoside phosphorylase.